Reading from the N-terminus, the 160-residue chain is Non-secretory ribonuclease (160 aa).

An N-terminal signal peptide occupies residues 1–27; sequence MVPKLFTSPICLLLLLGLMGVEGSLHA. C-linked (Man) tryptophan glycosylation occurs at Trp34. His42 acts as the Proton acceptor in catalysis. Asn44 carries an N-linked (GlcNAc...) asparagine glycan. 4 disulfides stabilise this stretch: Cys50–Cys110, Cys64–Cys122, Cys82–Cys137, and Cys89–Cys98. Residue Tyr60 is modified to 3'-nitrotyrosine. Position 65 to 69 (65 to 69) interacts with substrate; it reads KNQNT. Asn92, Asn111, and Asn138 each carry an N-linked (GlcNAc...) asparagine glycan. The Proton donor role is filled by His155.

This sequence belongs to the pancreatic ribonuclease family. Interacts with and forms a tight 1:1 complex with RNH1. Dimerization of two such complexes may occur.

It is found in the lysosome. Its subcellular location is the cytoplasmic granule. The enzyme catalyses an [RNA] containing cytidine + H2O = an [RNA]-3'-cytidine-3'-phosphate + a 5'-hydroxy-ribonucleotide-3'-[RNA].. It catalyses the reaction an [RNA] containing uridine + H2O = an [RNA]-3'-uridine-3'-phosphate + a 5'-hydroxy-ribonucleotide-3'-[RNA].. Functionally, this is a non-secretory ribonuclease. It is a pyrimidine specific nuclease with a slight preference for U. Cytotoxin and helminthotoxin. Possesses a wide variety of biological activities. In Papio hamadryas (Hamadryas baboon), this protein is Non-secretory ribonuclease (RNASE2).